We begin with the raw amino-acid sequence, 76 residues long: Small ribosomal subunit protein bS18 (76 aa).

It belongs to the bacterial ribosomal protein bS18 family. In terms of assembly, part of the 30S ribosomal subunit. Forms a tight heterodimer with protein bS6.

In terms of biological role, binds as a heterodimer with protein bS6 to the central domain of the 16S rRNA, where it helps stabilize the platform of the 30S subunit. The polypeptide is Small ribosomal subunit protein bS18 (Alkaliphilus metalliredigens (strain QYMF)).